The sequence spans 573 residues: PCNA-interacting partner (573 aa).

Disordered regions lie at residues 470–505 and 531–560; these read VGKARIEASSENAHVGRWKGDKLPRKSTQRQISKGK and PKVPSGSHSKAGGKLAQGTKGNRCPARGKL.

Belongs to the PARI family. Interacts with RAD51 and PCNA. Interacts with PARP1. Interacts with TASOR. Expressed in the ovary, Sertoli cells of the testis and in granular cells within the cerebellum.

The protein localises to the cytoplasm. The protein resides in the nucleus. Functionally, required to suppress inappropriate homologous recombination, thereby playing a central role DNA repair and in the maintenance of genomic stability. Antagonizes homologous recombination by interfering with the formation of the RAD51-DNA homologous recombination structure. Binds single-strand DNA and poly(A) homopolymers. Positively regulate the poly(ADP-ribosyl)ation activity of PARP1; however such function may be indirect. The polypeptide is PCNA-interacting partner (Parpbp) (Mus musculus (Mouse)).